The sequence spans 811 residues: MLMTATGSPFLTAETIIVAADRAARAIPPLWPLASSVAVNPFIGQAGDTLPTAAARLRRAAGIALTMPRSWYAERLRSGEIAEGDLQAAFDAAPAELRPKTLAALKQAAHAQGTRPPALPTVAELARDLDSIDWPGIVNDRIGHWASGYFDQGQALWATAQAQRAYAAWRTVATHDLTPEIAGLAGFAQNVADAPADAEAALVRCVTRLGLSGAALESYFHRLLMTLGGWGQIARYRLWQAELTGNTDASVVDLLAIRLTWEAALLRQYGAALEPQWQAAIAAYARPVAATLEDGVDAILQEAAERAAQRRLHSLLSETPSALAAPGRPALQMAFCIDVRSEVFRRALESLDPGIRTLGFAGFFGLGIGHRRFGSDVVEARLPVLLRPGVFTCSGEATPAIDKADLTARITARAKRAWGRFKLAAISSFAFVEAAGPIYVGRLLRDGLALPRPSAPNDPAPRPADDLGFDTRLGMAANVLRAMSLTEGFARLVLLAGHGASVVNNPHASALHCGACGGYSGEVNARLLAALLNDRDVRAGLASQGIRIPDDTVFLGALHDTTTDEVTVYAADHPSVAHAGDLERARRWLTSAGVLARGERALRLPRAARSQDIPHRARDWAELRPEWALAGCQAFVAAPRERTAGRDLEGRAFLHDYDWRRDKGFGVLELILTAPVVVASWISLQYYGSVVAPDVFGAGNKLLHNVTGGIGVVEGNGGLLRSGLPWQSVHDGEQLAHEPLRLSVLIEAPREAIAGILERHPGVRTLFDNRWLHLFALDDEGHMAWRYTGDLRWENCSRDAASGRIPLRELA.

Zn(2+) contacts are provided by C336, D338, H498, and C513.

This sequence belongs to the inorganic carbon transporter (TC 9.A.2) DabA family. Forms a complex with DabB. Requires Zn(2+) as cofactor.

The protein localises to the cell inner membrane. Part of an energy-coupled inorganic carbon pump. This chain is Probable inorganic carbon transporter subunit DabA, found in Rhodospirillum centenum (strain ATCC 51521 / SW).